A 209-amino-acid chain; its full sequence is Uracil phosphoribosyltransferase (209 aa).

5-phospho-alpha-D-ribose 1-diphosphate-binding positions include Arg79, Arg104, and 131 to 139; that span reads DPMLATGGS. Uracil is bound by residues Ile194 and 199 to 201; that span reads GDA. Asp200 serves as a coordination point for 5-phospho-alpha-D-ribose 1-diphosphate.

Belongs to the UPRTase family. Requires Mg(2+) as cofactor.

It catalyses the reaction UMP + diphosphate = 5-phospho-alpha-D-ribose 1-diphosphate + uracil. It functions in the pathway pyrimidine metabolism; UMP biosynthesis via salvage pathway; UMP from uracil: step 1/1. Allosterically activated by GTP. Its function is as follows. Catalyzes the conversion of uracil and 5-phospho-alpha-D-ribose 1-diphosphate (PRPP) to UMP and diphosphate. This chain is Uracil phosphoribosyltransferase, found in Lactobacillus delbrueckii subsp. bulgaricus (strain ATCC 11842 / DSM 20081 / BCRC 10696 / JCM 1002 / NBRC 13953 / NCIMB 11778 / NCTC 12712 / WDCM 00102 / Lb 14).